Here is a 236-residue protein sequence, read N- to C-terminus: Leucyl/phenylalanyl-tRNA--protein transferase (236 aa).

It belongs to the L/F-transferase family.

It is found in the cytoplasm. The enzyme catalyses N-terminal L-lysyl-[protein] + L-leucyl-tRNA(Leu) = N-terminal L-leucyl-L-lysyl-[protein] + tRNA(Leu) + H(+). It carries out the reaction N-terminal L-arginyl-[protein] + L-leucyl-tRNA(Leu) = N-terminal L-leucyl-L-arginyl-[protein] + tRNA(Leu) + H(+). It catalyses the reaction L-phenylalanyl-tRNA(Phe) + an N-terminal L-alpha-aminoacyl-[protein] = an N-terminal L-phenylalanyl-L-alpha-aminoacyl-[protein] + tRNA(Phe). Functionally, functions in the N-end rule pathway of protein degradation where it conjugates Leu, Phe and, less efficiently, Met from aminoacyl-tRNAs to the N-termini of proteins containing an N-terminal arginine or lysine. The chain is Leucyl/phenylalanyl-tRNA--protein transferase from Vibrio atlanticus (strain LGP32) (Vibrio splendidus (strain Mel32)).